The primary structure comprises 149 residues: Calmodulin-2 (149 aa).

Alanine 2 is subject to N-acetylalanine. EF-hand domains follow at residues 8–43, 44–79, 81–116, and 117–149; these read EQIA…LGQN, PTEA…KMKD, DSEE…LGEK, and LTDE…MLAK. Positions 21, 23, 25, 27, 32, 57, 59, 61, 63, 68, 94, 96, 98, 100, and 105 each coordinate Ca(2+). At lysine 116 the chain carries N6,N6,N6-trimethyllysine. Ca(2+) contacts are provided by aspartate 130, aspartate 132, aspartate 134, glutamine 136, and glutamate 141.

The protein belongs to the calmodulin family.

Calmodulin mediates the control of a large number of enzymes, ion channels and other proteins by Ca(2+). Among the enzymes to be stimulated by the calmodulin-Ca(2+) complex are a number of protein kinases and phosphatases. This is Calmodulin-2 (CAM72) from Petunia hybrida (Petunia).